The following is a 196-amino-acid chain: Probable nicotinate-nucleotide adenylyltransferase (196 aa).

The protein belongs to the NadD family.

It carries out the reaction nicotinate beta-D-ribonucleotide + ATP + H(+) = deamido-NAD(+) + diphosphate. The protein operates within cofactor biosynthesis; NAD(+) biosynthesis; deamido-NAD(+) from nicotinate D-ribonucleotide: step 1/1. Functionally, catalyzes the reversible adenylation of nicotinate mononucleotide (NaMN) to nicotinic acid adenine dinucleotide (NaAD). This Thermotoga petrophila (strain ATCC BAA-488 / DSM 13995 / JCM 10881 / RKU-1) protein is Probable nicotinate-nucleotide adenylyltransferase.